The sequence spans 317 residues: Actin-related protein 2/3 complex subunit 2 (317 aa).

Belongs to the ARPC2 family. In terms of assembly, component of the Arp2/3 complex composed of arp2, act2, arc1/p41-ARC, arc2/p34-ARC, arc3/p21-ARC, arc4/p20-ARC and arc5/p16-ARC.

It localises to the cytoplasm. It is found in the cytoskeleton. Its subcellular location is the actin patch. In terms of biological role, functions as actin-binding component of the Arp2/3 complex which is involved in regulation of actin polymerization and together with an activating nucleation-promoting factor (NPF) mediates the formation of branched actin networks. Seems to contact the mother actin filament. The protein is Actin-related protein 2/3 complex subunit 2 (arc2) of Schizosaccharomyces pombe (strain 972 / ATCC 24843) (Fission yeast).